A 460-amino-acid polypeptide reads, in one-letter code: MLTIYNTLSKAKETFKPLDGNKVRMYVCGMTVYDYCHLGHGRSMVAFDLVTRWLRKSGYDLTYVRNITDIDDKIINRANENGETFDALTARMIDAMHEDERRLNILPPDQEPRATDHIAGMHAMIQTLIDKGYAYAPGNGDVYYRVGKFVGYGKLSRKKIEDLRIGARIEVDEAKQDPLDFVLWKGVKPGEPSWESPWGPGRPGWHIECSVMSTCCLGESFDIHGGGSDLEFPHHENEIAQSEAATGKQYANAWMHCGMIRINGEKMSKSLNNFFTIRDVLEKYHPEVVRYLLVASHYRSAINYSEDSLRDAKGALERFYHALRGLPRVAAKGGEAFVERFSMAMNDDFGTPEACAVLFDLVREINRLRDSDLEAAAGLAGRLRELGDVLGVLQLEADDFLRAGAEGKVDAAEVEGLIQARLQARTDKNWAESDRIRDQLTAMGVVLEDSKGATTWRLAD.

Residue Cys28 coordinates Zn(2+). The 'HIGH' region signature appears at Met30 to His40. Zn(2+)-binding residues include Cys209, His234, and Glu238. A 'KMSKS' region motif is present at residues Lys266–Ser270. An ATP-binding site is contributed by Lys269.

It belongs to the class-I aminoacyl-tRNA synthetase family. In terms of assembly, monomer. Zn(2+) serves as cofactor.

The protein localises to the cytoplasm. The enzyme catalyses tRNA(Cys) + L-cysteine + ATP = L-cysteinyl-tRNA(Cys) + AMP + diphosphate. The protein is Cysteine--tRNA ligase of Pseudomonas putida (strain GB-1).